Here is a 1155-residue protein sequence, read N- to C-terminus: Protein BREAST CANCER SUSCEPTIBILITY 2 homolog B (1155 aa).

4 BRCA2 repeats span residues 63-97 (MPGE…ENVA), 116-150 (TAET…SDMI), 163-197 (FGVP…LEED), and 257-291 (LKVP…DPEL).

Interacts with RAD51 and DMC1. Interacts with DSS1(I) and DSS1(V). Can interact with both RAD51 and DSS1(I) or both DMC1 and DSS1(I) in a tripartite complex. Expressed in flower buds.

In terms of biological role, involved in double-strand break repair and/or homologous recombination by mediating RAD51- and DMC1-facilitated DNA repair. Plays an essential role in both somatic and meiotic homologous recombination. Is crucial for the formation of RAD51 and DMC1 foci during male meiotic homologous recombination in prophase I. This is Protein BREAST CANCER SUSCEPTIBILITY 2 homolog B from Arabidopsis thaliana (Mouse-ear cress).